A 689-amino-acid chain; its full sequence is Elongation factor G (689 aa).

Positions 9–283 (AKFRNIGIMA…AIVEFMPSPL (275 aa)) constitute a tr-type G domain. GTP is bound by residues 18 to 25 (AHIDAGKT), 82 to 86 (DTPGH), and 136 to 139 (NKMD).

The protein belongs to the TRAFAC class translation factor GTPase superfamily. Classic translation factor GTPase family. EF-G/EF-2 subfamily.

Its subcellular location is the cytoplasm. In terms of biological role, catalyzes the GTP-dependent ribosomal translocation step during translation elongation. During this step, the ribosome changes from the pre-translocational (PRE) to the post-translocational (POST) state as the newly formed A-site-bound peptidyl-tRNA and P-site-bound deacylated tRNA move to the P and E sites, respectively. Catalyzes the coordinated movement of the two tRNA molecules, the mRNA and conformational changes in the ribosome. This is Elongation factor G from Clostridium botulinum (strain Kyoto / Type A2).